A 381-amino-acid chain; its full sequence is 3-dehydroquinate synthase (381 aa).

NAD(+) is bound by residues Glu-81 to Lys-86, Gly-115 to Asp-119, Thr-139 to Ser-140, Lys-152, and Lys-161. Glu-194, His-256, and His-274 together coordinate Zn(2+).

It belongs to the sugar phosphate cyclases superfamily. Dehydroquinate synthase family. Co(2+) serves as cofactor. It depends on Zn(2+) as a cofactor. The cofactor is NAD(+).

Its subcellular location is the cytoplasm. The enzyme catalyses 7-phospho-2-dehydro-3-deoxy-D-arabino-heptonate = 3-dehydroquinate + phosphate. It participates in metabolic intermediate biosynthesis; chorismate biosynthesis; chorismate from D-erythrose 4-phosphate and phosphoenolpyruvate: step 2/7. Functionally, catalyzes the conversion of 3-deoxy-D-arabino-heptulosonate 7-phosphate (DAHP) to dehydroquinate (DHQ). The polypeptide is 3-dehydroquinate synthase (Rhodopseudomonas palustris (strain TIE-1)).